The primary structure comprises 315 residues: Protein rlx (315 aa).

The disordered stretch occupies residues 263-315 (TEQLKQRRVERAQETKQAHSKISSRDTRESENQRERAKGNNIRIERGDEGLSR).

In terms of biological role, this protein is probably required for relaxation complex formation and plasmid mobilization by conjugative plasmids. The protein is Protein rlx (rlx) of Staphylococcus aureus.